Reading from the N-terminus, the 214-residue chain is Ribosomal RNA small subunit methyltransferase G (214 aa).

S-adenosyl-L-methionine is bound by residues Gly78, Leu83, 129–130 (AE), and Arg144.

This sequence belongs to the methyltransferase superfamily. RNA methyltransferase RsmG family.

It localises to the cytoplasm. It carries out the reaction guanosine(527) in 16S rRNA + S-adenosyl-L-methionine = N(7)-methylguanosine(527) in 16S rRNA + S-adenosyl-L-homocysteine. Its function is as follows. Specifically methylates the N7 position of guanine in position 527 of 16S rRNA. The chain is Ribosomal RNA small subunit methyltransferase G from Marinobacter nauticus (strain ATCC 700491 / DSM 11845 / VT8) (Marinobacter aquaeolei).